The primary structure comprises 506 residues: Pentatricopeptide repeat-containing protein At5g18475 (506 aa).

The tract at residues Ser-28 to Asn-48 is disordered. 12 PPR repeats span residues Asn-88–Phe-122, Gln-123–Pro-158, Ser-159–Pro-194, Asn-195–Tyr-229, Asn-231–Pro-266, Asp-267–Pro-301, Asn-302–Leu-336, Asp-337–Ala-371, Asp-372–Leu-406, Asn-407–Pro-441, His-442–Pro-476, and Gly-477–Ser-506.

It belongs to the PPR family. P subfamily.

This is Pentatricopeptide repeat-containing protein At5g18475 from Arabidopsis thaliana (Mouse-ear cress).